Here is a 590-residue protein sequence, read N- to C-terminus: Aspartate--tRNA(Asp/Asn) ligase (590 aa).

Glu-182 lines the L-aspartate pocket. Residues Gln-206 to Lys-209 are aspartate. Residue Arg-228 coordinates L-aspartate. ATP contacts are provided by residues Arg-228 to Glu-230 and Gln-237. His-454 serves as a coordination point for L-aspartate. Glu-488 contacts ATP. Residue Arg-495 coordinates L-aspartate. Gly-540 to Arg-543 is a binding site for ATP.

This sequence belongs to the class-II aminoacyl-tRNA synthetase family. Type 1 subfamily. Homodimer.

The protein localises to the cytoplasm. It carries out the reaction tRNA(Asx) + L-aspartate + ATP = L-aspartyl-tRNA(Asx) + AMP + diphosphate. In terms of biological role, aspartyl-tRNA synthetase with relaxed tRNA specificity since it is able to aspartylate not only its cognate tRNA(Asp) but also tRNA(Asn). Reaction proceeds in two steps: L-aspartate is first activated by ATP to form Asp-AMP and then transferred to the acceptor end of tRNA(Asp/Asn). The protein is Aspartate--tRNA(Asp/Asn) ligase of Halothermothrix orenii (strain H 168 / OCM 544 / DSM 9562).